Reading from the N-terminus, the 353-residue chain is Ubiquinol oxidase 2, mitochondrial (353 aa).

The N-terminal 21 residues, 1-21 (MSQLITKAALRVLLVCGRGNC), are a transit peptide targeting the mitochondrion. A helical membrane pass occupies residues 178–198 (AMMLETVAAVPGMVGGMLLHL). Fe cation-binding residues include glutamate 182, glutamate 221, and histidine 224. The chain crosses the membrane as a helical span at residues 240-260 (LLVMLVQGIFFNSFFVCYVIS). Fe cation-binding residues include glutamate 272, glutamate 323, and histidine 326.

The protein belongs to the alternative oxidase family. In terms of assembly, homodimer; disulfide-linked. Fe cation serves as cofactor. Maximally expressed in dry seeds. Detected in roots, stems and leaves.

The protein localises to the mitochondrion inner membrane. It catalyses the reaction 2 a ubiquinol + O2 = 2 a ubiquinone + 2 H2O. Functionally, catalyzes the cyanide-resistant oxidation of ubiquinol and the reduction of molecular oxygen to water, but does not translocate protons and consequently is not linked to oxidative phosphorylation. May increase respiration when the cytochrome respiratory pathway is restricted, or in response to low temperatures. This is Ubiquinol oxidase 2, mitochondrial (AOX2) from Arabidopsis thaliana (Mouse-ear cress).